A 193-amino-acid chain; its full sequence is ATP synthase subunit b (193 aa).

The helical transmembrane segment at 35–55 (IPMMLATFIAFVIVFLLLFFF) threads the bilayer.

This sequence belongs to the ATPase B chain family. As to quaternary structure, F-type ATPases have 2 components, F(1) - the catalytic core - and F(0) - the membrane proton channel. F(1) has five subunits: alpha(3), beta(3), gamma(1), delta(1), epsilon(1). F(0) has three main subunits: a(1), b(2) and c(10-14). The alpha and beta chains form an alternating ring which encloses part of the gamma chain. F(1) is attached to F(0) by a central stalk formed by the gamma and epsilon chains, while a peripheral stalk is formed by the delta and b chains.

It localises to the cell membrane. In terms of biological role, f(1)F(0) ATP synthase produces ATP from ADP in the presence of a proton or sodium gradient. F-type ATPases consist of two structural domains, F(1) containing the extramembraneous catalytic core and F(0) containing the membrane proton channel, linked together by a central stalk and a peripheral stalk. During catalysis, ATP synthesis in the catalytic domain of F(1) is coupled via a rotary mechanism of the central stalk subunits to proton translocation. Component of the F(0) channel, it forms part of the peripheral stalk, linking F(1) to F(0). The polypeptide is ATP synthase subunit b (Mycoplasmopsis synoviae (strain 53) (Mycoplasma synoviae)).